Consider the following 362-residue polypeptide: uncharacterized protein (362 aa).

This is an uncharacterized protein from Caenorhabditis elegans.